Here is a 214-residue protein sequence, read N- to C-terminus: Glutathione S-transferase F11 (214 aa).

Residues 2-82 (VVKVYGQIKA…YYATKYADQG (81 aa)) enclose the GST N-terminal domain. Residues 11-12 (AA), 40-41 (QK), 53-54 (QV), and 66-67 (ES) each bind glutathione. Residues 89-214 (TLEGRAIVDQ…WKKLMELAAY (126 aa)) form the GST C-terminal domain.

It belongs to the GST superfamily. Phi family.

It is found in the cytoplasm. It localises to the cytosol. The enzyme catalyses RX + glutathione = an S-substituted glutathione + a halide anion + H(+). Functionally, may be involved in the conjugation of reduced glutathione to a wide number of exogenous and endogenous hydrophobic electrophiles and have a detoxification role against certain herbicides. This chain is Glutathione S-transferase F11, found in Arabidopsis thaliana (Mouse-ear cress).